The following is an 888-amino-acid chain: MQTHEIRERFTNHFVNAGHQAVPSASLILDDPNLLFVNAGMVPFKPYFLGQQTPPFENGTATSIQKCVRTLDIEEVGITTRHNTFFQMAGNFSFGQYFKEGAITHAWGLLTGSVADGGFGLDPERLWVTVYLDDDEAAEIWEKKIGVPAERIQRLGMADNYWSMGVPGPCGPCSEIYYDRGEKYGKEGGPVADDNRYMEIWNLVFMEKERGQGIGKDNFEILGDLPKKNIDTGMGVERVACILQDVENVYETDLLRPVIDVAETLTGTKYGSDNTSDIRFRVIADHSRTGMMLILDGVTPGNEGRGYILRRLLRRIIRSARLLGATGETMEQFMNTIMDTMTPSYPEIADNRERIMRVAVTEERAFLKTLVSGTHLFEEAATSIKAAGSTKVAGAQAFALHDTYGFPIDLTLEMAAEAGLEVDVEGFDSLMAEQRSRAKADSQAKKHGHTDLSIYREWVDNNPTVFTGFEELDSQSKVLGLLSDGAKISEATEGQEVEVILDQSPLYAESGGQLGDRGQILLGDTVLDVHDVQKIGKKLWVHKALVANGGLAVGDEVVASVDKQWRHAARQAHTATHLIHAALRQVLGPTAVQAGSMNKPGYLRFDFNYTEQLTPAQVEQIQAITNEAVDTDWAVNTVETSLEEAKAMGAMALFGENYGSTVRVVEIGGPFSMELCGGTHVAHSSQIGPVALLGESSIGSGVRRIEAYSGLNSFNYLSKERALAEGLASSLKAPSEELPERVAQLVDKLKAAEKEIEALHRQQLMAQTADLLNNAQEIGGVTTLLLRVKDNTNAGDLRTIATTLKDKLGDREGVLVIASDNAGKVPFVVAATKAAVARGAHSGNLVKLVGSYIDGRGGGKADLAQGSGANIAGLESAFGAVRAEIEAL.

Zn(2+) contacts are provided by H573, H577, C676, and H680.

The protein belongs to the class-II aminoacyl-tRNA synthetase family. The cofactor is Zn(2+).

Its subcellular location is the cytoplasm. The enzyme catalyses tRNA(Ala) + L-alanine + ATP = L-alanyl-tRNA(Ala) + AMP + diphosphate. In terms of biological role, catalyzes the attachment of alanine to tRNA(Ala) in a two-step reaction: alanine is first activated by ATP to form Ala-AMP and then transferred to the acceptor end of tRNA(Ala). Also edits incorrectly charged Ser-tRNA(Ala) and Gly-tRNA(Ala) via its editing domain. This Corynebacterium glutamicum (strain R) protein is Alanine--tRNA ligase.